A 419-amino-acid chain; its full sequence is MSFIPVAEDSDFPIQNLPYGVFSTQSNPKPRIGVAIGDQILDLSVIKHLFTGPALSKHQHVFDETTLNNFMGLGQAAWKEARASLQNLLSASQARLRDDKELRQRAFTSQASATMHLPATIGDYTDFYSSRQHATNVGIMFRGKENALLPNWLHLPVGYHGRASSIVVSGTPIRRPMGQMRPDNSKPPVYGACRLLDMELEMAFFVGPGNRFGEPIPISKAHEHIFGMVLMNDWSARDIQQWEYVPLGPFLGKSFGTTISPWVVPMDALMPFVVPNPKQDPKPLPYLCHSQPYTFDINLSVSLKGEGMSQAATICRSNFKHMYWTMLQQLTHHSVNGCNLRPGDLLASGTISGSDPESFGSMLELSWKGTKAIDVEQGQTRTFLLDGDEVIITGHCQGDGYRVGFGQCAGKVLPALSPA.

Position 2 is an N-acetylserine (Ser-2). Ser-84 and Ser-92 each carry phosphoserine. Asp-126 provides a ligand contact to Ca(2+). Tyr-128 contacts substrate. Catalysis depends on His-133, which acts as the Proton acceptor. Arg-142 lines the substrate pocket. The Ca(2+) site is built by Glu-199, Glu-201, and Asp-233. Asp-233 serves as a coordination point for Mg(2+). 2 residues coordinate substrate: Gln-240 and Tyr-244. Mg(2+) is bound by residues Lys-253 and Thr-257. At Ser-309 the chain carries Phosphoserine. Position 350 (Thr-350) interacts with substrate. Phosphoserine is present on Ser-417.

Belongs to the FAH family. As to quaternary structure, homodimer. The cofactor is Ca(2+). Requires Mg(2+) as cofactor. Mainly in liver and kidney.

The catalysed reaction is 4-fumarylacetoacetate + H2O = acetoacetate + fumarate + H(+). The protein operates within amino-acid degradation; L-phenylalanine degradation; acetoacetate and fumarate from L-phenylalanine: step 6/6. The sequence is that of Fumarylacetoacetase (Fah) from Mus musculus (Mouse).